We begin with the raw amino-acid sequence, 100 residues long: Large ribosomal subunit protein uL23 (100 aa).

Belongs to the universal ribosomal protein uL23 family. As to quaternary structure, part of the 50S ribosomal subunit. Contacts protein L29, and trigger factor when it is bound to the ribosome.

In terms of biological role, one of the early assembly proteins it binds 23S rRNA. One of the proteins that surrounds the polypeptide exit tunnel on the outside of the ribosome. Forms the main docking site for trigger factor binding to the ribosome. This is Large ribosomal subunit protein uL23 from Colwellia psychrerythraea (strain 34H / ATCC BAA-681) (Vibrio psychroerythus).